Consider the following 232-residue polypeptide: Thiamine import ATP-binding protein ThiQ (232 aa).

Residues 2-230 (LKLTDITWLY…KASASALLGI (229 aa)) form the ABC transporter domain. 32–39 (GPSGAGKS) is an ATP binding site.

Belongs to the ABC transporter superfamily. Thiamine importer (TC 3.A.1.19.1) family. The complex is composed of two ATP-binding proteins (ThiQ), two transmembrane proteins (ThiP) and a solute-binding protein (ThiB).

The protein resides in the cell inner membrane. It carries out the reaction thiamine(out) + ATP + H2O = thiamine(in) + ADP + phosphate + H(+). Functionally, part of the ABC transporter complex ThiBPQ involved in thiamine import. Responsible for energy coupling to the transport system. In Escherichia coli O157:H7, this protein is Thiamine import ATP-binding protein ThiQ.